A 185-amino-acid chain; its full sequence is Lipid A acyltransferase PagP (185 aa).

Positions 1-24 (MKTHNDILAALAALPLFLTGAAFA) are cleaved as a signal peptide. Residues His-57, Asp-100, and Ser-101 contribute to the active site.

It belongs to the lipid A palmitoyltransferase family. In terms of assembly, homodimer.

Its subcellular location is the cell outer membrane. It catalyses the reaction a lipid A + a 1,2-diacyl-sn-glycero-3-phosphocholine = a hepta-acyl lipid A + a 2-acyl-sn-glycero-3-phosphocholine. The enzyme catalyses a lipid IVA + a 1,2-diacyl-sn-glycero-3-phosphocholine = a lipid IVB + a 2-acyl-sn-glycero-3-phosphocholine. The catalysed reaction is a lipid IIA + a 1,2-diacyl-sn-glycero-3-phosphocholine = a lipid IIB + a 2-acyl-sn-glycero-3-phosphocholine. Functionally, transfers a fatty acid residue from the sn-1 position of a phospholipid to the N-linked hydroxyfatty acid chain on the proximal unit of lipid A or its precursors. This Edwardsiella tarda (strain FL6-60) protein is Lipid A acyltransferase PagP.